Consider the following 238-residue polypeptide: 1-(5-phosphoribosyl)-5-[(5-phosphoribosylamino)methylideneamino] imidazole-4-carboxamide isomerase (238 aa).

Asp8 acts as the Proton acceptor in catalysis. Asp129 acts as the Proton donor in catalysis.

The protein belongs to the HisA/HisF family.

It is found in the cytoplasm. The catalysed reaction is 1-(5-phospho-beta-D-ribosyl)-5-[(5-phospho-beta-D-ribosylamino)methylideneamino]imidazole-4-carboxamide = 5-[(5-phospho-1-deoxy-D-ribulos-1-ylimino)methylamino]-1-(5-phospho-beta-D-ribosyl)imidazole-4-carboxamide. Its pathway is amino-acid biosynthesis; L-histidine biosynthesis; L-histidine from 5-phospho-alpha-D-ribose 1-diphosphate: step 4/9. In Anaeromyxobacter sp. (strain Fw109-5), this protein is 1-(5-phosphoribosyl)-5-[(5-phosphoribosylamino)methylideneamino] imidazole-4-carboxamide isomerase.